Here is a 600-residue protein sequence, read N- to C-terminus: UvrABC system protein C (600 aa).

A GIY-YIG domain is found at 16 to 94; the sequence is EKPGCYQYFD…IKEYQPRYNV (79 aa). In terms of domain architecture, UVR spans 208–243; sequence HRLVRMYRDRMQAYSEELRFEEAQICKERIELLERY.

Belongs to the UvrC family. Interacts with UvrB in an incision complex.

Its subcellular location is the cytoplasm. Functionally, the UvrABC repair system catalyzes the recognition and processing of DNA lesions. UvrC both incises the 5' and 3' sides of the lesion. The N-terminal half is responsible for the 3' incision and the C-terminal half is responsible for the 5' incision. The polypeptide is UvrABC system protein C (Porphyromonas gingivalis (strain ATCC 33277 / DSM 20709 / CIP 103683 / JCM 12257 / NCTC 11834 / 2561)).